Consider the following 1878-residue polypeptide: DNA polymerase (1878 aa).

Disordered stretches follow at residues 691-727 (LFQADDDDDDDDEDEDDGLLDERQQDSAEDMKKKGPN) and 1839-1878 (TQDDVVKKKRAPKRAAIDRKSGSGGKKSKITAGKTAGTMF). Over residues 694–709 (ADDDDDDDDEDEDDGL) the composition is skewed to acidic residues. A compositionally biased stretch (basic and acidic residues) spans 710 to 723 (LDERQQDSAEDMKK). The segment covering 1868-1878 (ITAGKTAGTMF) has biased composition (low complexity).

This sequence belongs to the DNA polymerase type-B family.

The enzyme catalyses DNA(n) + a 2'-deoxyribonucleoside 5'-triphosphate = DNA(n+1) + diphosphate. This Magallana gigas (Pacific oyster) protein is DNA polymerase.